Reading from the N-terminus, the 206-residue chain is Small ribosomal subunit protein uS4 (206 aa).

Residues 96–156 enclose the S4 RNA-binding domain; the sequence is SRLDNVVYRM…EKSKKQVRIA (61 aa).

This sequence belongs to the universal ribosomal protein uS4 family. As to quaternary structure, part of the 30S ribosomal subunit. Contacts protein S5. The interaction surface between S4 and S5 is involved in control of translational fidelity.

In terms of biological role, one of the primary rRNA binding proteins, it binds directly to 16S rRNA where it nucleates assembly of the body of the 30S subunit. Its function is as follows. With S5 and S12 plays an important role in translational accuracy. The chain is Small ribosomal subunit protein uS4 from Laribacter hongkongensis (strain HLHK9).